The chain runs to 313 residues: 2-oxoglutarate-dependent dioxygenase eupC (313 aa).

One can recognise a Fe2OG dioxygenase domain in the interval 187–284 (PSIPMRFLHY…LNAKALDGSG (98 aa)). Fe cation is bound by residues His-212, Asp-214, and His-263. Position 274 (Lys-274) interacts with 2-oxoglutarate.

This sequence belongs to the iron/ascorbate-dependent oxidoreductase family. It depends on Fe(2+) as a cofactor.

It participates in secondary metabolite biosynthesis; terpenoid biosynthesis. Functionally, 2-oxoglutarate-dependent dioxygenase; part of the gene cluster that mediates the biosynthesis of eupenifeldin, a bistropolone meroterpenoid that acts as an antitumor agent. The first step of eupenifeldin biosynthesis is the biosynthesis of 3-methylorcinaldehyde performed by the non-reducing polyketide synthase eupA. Oxidative dearomatization of 3-methylorcinaldehyde likely catalyzed by the FAD-dependent monooxygenase eupB is followed by oxidative ring expansion by the 2-oxoglutarate-dependent dioxygenase eupC to provide the first tropolone metabolite, tropolone stipitaldehyde. In parallel, generation of sesquiterpene alpha-humulene from farnesylpyrophosphate (FPP) is catalyzed by the terpene cyclase eupE. The cytochrome P450 monooxygenase eupD then hydroxylates humulene to humulenol. The putative Diels-Alderase eupF probably catalyzes the formation of the tropolone-humulene skeleton by linking humulenol and the polyketide moiety. The short-chain dehydrogenase/reductase eupG and the flavin-dependent monooxygenase eupH are also essential for eupenifeldin biosynthesis and are likely the additional decorating enzymes of the tropolone-humulene skeleton to produce final eupenifeldin or derivatives. In Phoma sp, this protein is 2-oxoglutarate-dependent dioxygenase eupC.